The sequence spans 245 residues: Membrane-associated progesterone-binding protein 4 (245 aa).

A helical transmembrane segment spans residues 6 to 26 (RFLLSPFVGVTFIVVLVSLYF). One can recognise a Cytochrome b5 heme-binding domain in the interval 39-138 (KRLFSAEELA…RTYTPVGKLV (100 aa)). The interval 45-138 (EELALYNGTD…RTYTPVGKLV (94 aa)) is steroid-binding.

The protein belongs to the cytochrome b5 family. MAPR subfamily.

Its subcellular location is the membrane. This is Membrane-associated progesterone-binding protein 4 from Arabidopsis thaliana (Mouse-ear cress).